Consider the following 382-residue polypeptide: Mannitol-1-phosphate 5-dehydrogenase (382 aa).

Position 3-14 (3-14 (ALHFGAGNIGRG)) interacts with NAD(+). Lys-269 is subject to N6-acetyllysine.

Belongs to the mannitol dehydrogenase family.

It carries out the reaction D-mannitol 1-phosphate + NAD(+) = beta-D-fructose 6-phosphate + NADH + H(+). The protein is Mannitol-1-phosphate 5-dehydrogenase of Escherichia coli O17:K52:H18 (strain UMN026 / ExPEC).